The following is a 267-amino-acid chain: Phosphatidylglycerol--prolipoprotein diacylglyceryl transferase (267 aa).

The next 4 membrane-spanning stretches (helical) occupy residues 20-40 (LEIR…VYLA), 57-77 (FILI…VAFS), 88-108 (IFAI…GAIV), and 117-137 (FINT…AQAI). Position 139 (arginine 139) interacts with a 1,2-diacyl-sn-glycero-3-phospho-(1'-sn-glycerol). Helical transmembrane passes span 175 to 195 (QPTF…VCVL), 205 to 225 (GEIT…IEGL), and 235 to 255 (IRVS…MVVL).

The protein belongs to the Lgt family.

The protein localises to the cell membrane. It catalyses the reaction L-cysteinyl-[prolipoprotein] + a 1,2-diacyl-sn-glycero-3-phospho-(1'-sn-glycerol) = an S-1,2-diacyl-sn-glyceryl-L-cysteinyl-[prolipoprotein] + sn-glycerol 1-phosphate + H(+). Its pathway is protein modification; lipoprotein biosynthesis (diacylglyceryl transfer). Its function is as follows. Catalyzes the transfer of the diacylglyceryl group from phosphatidylglycerol to the sulfhydryl group of the N-terminal cysteine of a prolipoprotein, the first step in the formation of mature lipoproteins. This chain is Phosphatidylglycerol--prolipoprotein diacylglyceryl transferase, found in Streptococcus suis (strain 98HAH33).